A 172-amino-acid polypeptide reads, in one-letter code: Translation initiation factor IF-3 (172 aa).

Belongs to the IF-3 family. In terms of assembly, monomer.

It is found in the cytoplasm. Functionally, IF-3 binds to the 30S ribosomal subunit and shifts the equilibrium between 70S ribosomes and their 50S and 30S subunits in favor of the free subunits, thus enhancing the availability of 30S subunits on which protein synthesis initiation begins. This Bartonella quintana (strain Toulouse) (Rochalimaea quintana) protein is Translation initiation factor IF-3.